Reading from the N-terminus, the 171-residue chain is Transcriptional repressor NrdR (171 aa).

A compositionally biased stretch (basic residues) spans 1 to 10 (MQCPHCHHNG). A disordered region spans residues 1-21 (MQCPHCHHNGSRVVDSRPTDD). The segment at 3-34 (CPHCHHNGSRVVDSRPTDDGRVIRRRRECENC) is a zinc-finger region. Positions 49–139 (LLVIKKNGAR…VYRQFKDMHV (91 aa)) constitute an ATP-cone domain. The tract at residues 152-171 (KVKLAKPSAKTTHAPKRKKD) is disordered.

This sequence belongs to the NrdR family. It depends on Zn(2+) as a cofactor.

Negatively regulates transcription of bacterial ribonucleotide reductase nrd genes and operons by binding to NrdR-boxes. The sequence is that of Transcriptional repressor NrdR from Lactiplantibacillus plantarum (strain ATCC BAA-793 / NCIMB 8826 / WCFS1) (Lactobacillus plantarum).